Here is a 497-residue protein sequence, read N- to C-terminus: Cytoplasmic dynein 1 light intermediate chain 2 (497 aa).

61 to 68 (GEDGSGKT) lines the ATP pocket. Disordered regions lie at residues 187-206 (PEEG…SGSD), 366-408 (QQES…IKNN), 423-461 (LSKK…TEQC), and 474-497 (QEEL…ENEA). Phosphoserine is present on residues S194, S369, and S377. Position 383 is an omega-N-methylarginine (R383). Polar residues predominate over residues 423-444 (LSKKTGSPGSPSAGGVQSTAKK). Phosphothreonine is present on T427. Phosphoserine is present on residues S429 and S432. Over residues 476-485 (ELDRMTRKPD) the composition is skewed to basic and acidic residues. A compositionally biased stretch (polar residues) spans 487-497 (MVTNSSTENEA).

The protein belongs to the dynein light intermediate chain family. As to quaternary structure, homodimer. The cytoplasmic dynein 1 complex consists of two catalytic heavy chains (HCs) and a number of non-catalytic subunits presented by intermediate chains (ICs), light intermediate chains (LICs) and light chains (LCs); the composition seems to vary in respect to the IC, LIC and LC composition. The heavy chain homodimer serves as a scaffold for the probable homodimeric assembly of the respective non-catalytic subunits. The ICs and LICs bind directly to the HC dimer and the LCs assemble on the IC dimer. Self-associates. Interacts with DYNC1H1; DYNC1LI1 and DYNC1LI2 bind mutually exclusive to DYNC1H1. As to expression, ubiquitous.

The protein resides in the cytoplasm. It is found in the cytoskeleton. Acts as one of several non-catalytic accessory components of the cytoplasmic dynein 1 complex that are thought to be involved in linking dynein to cargos and to adapter proteins that regulate dynein function. Cytoplasmic dynein 1 acts as a motor for the intracellular retrograde motility of vesicles and organelles along microtubules. May play a role in binding dynein to membranous organelles or chromosomes. This is Cytoplasmic dynein 1 light intermediate chain 2 (Dync1li2) from Rattus norvegicus (Rat).